The primary structure comprises 277 residues: Co-chaperone protein DjlA (277 aa).

Over 1–6 (MRYWGK) the chain is Periplasmic. The helical transmembrane segment at 7 to 31 (LLGLVLGVMYAPGVVGALLGLLVGH) threads the bilayer. At 32 to 277 (MVDRALGAKR…DLIKREKGFK (246 aa)) the chain is on the cytoplasmic side. The region spanning 211 to 277 (DACKVLGVNS…DLIKREKGFK (67 aa)) is the J domain.

In terms of assembly, homodimer.

It is found in the cell inner membrane. Regulatory DnaK co-chaperone. Direct interaction between DnaK and DjlA is needed for the induction of the wcaABCDE operon, involved in the synthesis of a colanic acid polysaccharide capsule, possibly through activation of the RcsB/RcsC phosphotransfer signaling pathway. The colanic acid capsule may help the bacterium survive conditions outside the host. This is Co-chaperone protein DjlA from Yersinia pestis.